The primary structure comprises 277 residues: Shikimate dehydrogenase (NADP(+)) (277 aa).

Residues 17-19 (SRS) and T64 contribute to the shikimate site. K68 acts as the Proton acceptor in catalysis. Shikimate is bound by residues N88 and D103. Residues 128 to 132 (GAGGS) and L217 each bind NADP(+). Y219 is a shikimate binding site. Position 240 (G240) interacts with NADP(+).

The protein belongs to the shikimate dehydrogenase family. As to quaternary structure, homodimer.

The enzyme catalyses shikimate + NADP(+) = 3-dehydroshikimate + NADPH + H(+). It functions in the pathway metabolic intermediate biosynthesis; chorismate biosynthesis; chorismate from D-erythrose 4-phosphate and phosphoenolpyruvate: step 4/7. Involved in the biosynthesis of the chorismate, which leads to the biosynthesis of aromatic amino acids. Catalyzes the reversible NADPH linked reduction of 3-dehydroshikimate (DHSA) to yield shikimate (SA). The chain is Shikimate dehydrogenase (NADP(+)) from Afipia carboxidovorans (strain ATCC 49405 / DSM 1227 / KCTC 32145 / OM5) (Oligotropha carboxidovorans).